An 89-amino-acid polypeptide reads, in one-letter code: Small ribosomal subunit protein uS15 (89 aa).

Belongs to the universal ribosomal protein uS15 family. As to quaternary structure, part of the 30S ribosomal subunit. Forms a bridge to the 50S subunit in the 70S ribosome, contacting the 23S rRNA.

In terms of biological role, one of the primary rRNA binding proteins, it binds directly to 16S rRNA where it helps nucleate assembly of the platform of the 30S subunit by binding and bridging several RNA helices of the 16S rRNA. Its function is as follows. Forms an intersubunit bridge (bridge B4) with the 23S rRNA of the 50S subunit in the ribosome. This is Small ribosomal subunit protein uS15 from Acidithiobacillus ferrooxidans (strain ATCC 23270 / DSM 14882 / CIP 104768 / NCIMB 8455) (Ferrobacillus ferrooxidans (strain ATCC 23270)).